We begin with the raw amino-acid sequence, 550 residues long: CTP synthase (550 aa).

The interval 1–270 is amidoligase domain; the sequence is MTKFVFVTGG…DRLICEELRL (270 aa). Ser-13 serves as a coordination point for CTP. UTP is bound at residue Ser-13. Residues 14–19 and Asp-71 contribute to the ATP site; that span reads SLGKGI. Mg(2+)-binding residues include Asp-71 and Glu-144. CTP is bound by residues 151–153, 191–196, and Lys-227; these read DIE and KTKPTQ. Residues 191–196 and Lys-227 each bind UTP; that span reads KTKPTQ. Positions 295-547 constitute a Glutamine amidotransferase type-1 domain; that stretch reads TIGMVGKYVD…VEAALASQQR (253 aa). L-glutamine is bound at residue Gly-356. The Nucleophile; for glutamine hydrolysis role is filled by Cys-383. Residues 384-387, Glu-407, and Arg-473 contribute to the L-glutamine site; that span reads LGMQ. Residues His-520 and Glu-522 contribute to the active site.

The protein belongs to the CTP synthase family. As to quaternary structure, homotetramer.

The catalysed reaction is UTP + L-glutamine + ATP + H2O = CTP + L-glutamate + ADP + phosphate + 2 H(+). It catalyses the reaction L-glutamine + H2O = L-glutamate + NH4(+). It carries out the reaction UTP + NH4(+) + ATP = CTP + ADP + phosphate + 2 H(+). It participates in pyrimidine metabolism; CTP biosynthesis via de novo pathway; CTP from UDP: step 2/2. Its activity is regulated as follows. Allosterically activated by GTP, when glutamine is the substrate; GTP has no effect on the reaction when ammonia is the substrate. The allosteric effector GTP functions by stabilizing the protein conformation that binds the tetrahedral intermediate(s) formed during glutamine hydrolysis. Inhibited by the product CTP, via allosteric rather than competitive inhibition. In terms of biological role, catalyzes the ATP-dependent amination of UTP to CTP with either L-glutamine or ammonia as the source of nitrogen. Regulates intracellular CTP levels through interactions with the four ribonucleotide triphosphates. This Cupriavidus taiwanensis (strain DSM 17343 / BCRC 17206 / CCUG 44338 / CIP 107171 / LMG 19424 / R1) (Ralstonia taiwanensis (strain LMG 19424)) protein is CTP synthase.